Here is a 605-residue protein sequence, read N- to C-terminus: Exo-beta-1,3-glucanase (605 aa).

The tract at residues 1–23 (MHVPPTDPARSAPPASPHRRRRP) is disordered. The signal sequence occupies residues 1–44 (MHVPPTDPARSAPPASPHRRRRPKALGLTALAAAMLMAVPTTQA). Residues glutamine 174, 194 to 196 (YGW), glutamine 217, 446 to 449 (WRAD), and 480 to 481 (EH) each bind substrate. Residue glutamate 502 is the Proton donor of the active site. Tyrosine 505 is a binding site for substrate.

The protein belongs to the glycosyl hydrolase 55 family.

It localises to the secreted. The catalysed reaction is Successive hydrolysis of beta-D-glucose units from the non-reducing ends of (1-&gt;3)-beta-D-glucans, releasing alpha-glucose.. In terms of biological role, exo-beta-1,3-glucanase that specifically hydrolyzes laminarin and laminarioligosaccharides, producing glucose and laminaribiose as end products. The sequence is that of Exo-beta-1,3-glucanase from Streptomyces sp. (strain SirexAA-E / ActE).